An 86-amino-acid polypeptide reads, in one-letter code: RNA-binding protein Hfq (86 aa).

A Sm domain is found at 10 to 71; that stretch reads DLFLNNARKE…VSTIQPGKYI (62 aa).

It belongs to the Hfq family. In terms of assembly, homohexamer.

RNA chaperone that binds small regulatory RNA (sRNAs) and mRNAs to facilitate mRNA translational regulation in response to envelope stress, environmental stress and changes in metabolite concentrations. Also binds with high specificity to tRNAs. In Clostridioides difficile (strain 630) (Peptoclostridium difficile), this protein is RNA-binding protein Hfq.